Reading from the N-terminus, the 220-residue chain is MTSHRSESKATIKVRPPPSFIGGVQDKSWTPTPENWLYGAWYMTHTSQQYYWERTKNFVIQYEPVMNGVWPCTNQELVSLTPLNQPERIYTAFGIDSPIAGLDDAWLCQCTGHLSHISDHVAFLAWGADLQNVDWVVLYSTPLPGATVGLPAQVAIMSRERFGPDNTMVEAIKEALCAAGNSELTKLVDNLRPLLQEDLGSGRPTCEYHVVQNVDSLTRF.

It functions in the pathway polyketide biosynthesis. Part of the gene cluster B that mediates the biosynthesis of botcinic acid and its botcinin derivatives, acetate-derived polyketides that contribute to virulence when combined with the sesquiterpene botrydial. Botcinic acid and its derivatives have been shown to induce chlorosis and necrosis during host plant infection, but also have antifungal activities. Two polyketide synthases, BOA6 and BOA9, are involved in the biosynthesis of botcinins. BOA6 mediates the formation of the per-methylated tetraketide core by condensation of four units of malonyl-CoA with one unit of acetyl-CoA, which would be methylated in activated methylene groups to yield a bicyclic acid intermediate that could then either be converted to botrylactone derivatives or lose the starter acetate unit through a retro-Claisen type C-C bond cleavage to yield botcinin derivatives. The second polyketide synthase, BOA9, is probably required for the biosynthesis of the tetraketide side chain of botcinins. The methyltransferase (MT) domain within BOA6 is probably responsible for the incorporation of four methyl groups. The trans-enoyl reductase BOA5 might take over the enoyl reductase function of BOA6 that misses an ER domain. The monooxygenases BOA2, BOA3 and BOA4 might be involved in further hydroxylations at C4, C5 and C8, whereas BOA7, close to BOA9, could potentially be involved in the hydroxylation at C4 in the side chain of botcinins. The protein is Botcinic acid biosynthesis cluster B protein 12 of Botryotinia fuckeliana (strain B05.10) (Noble rot fungus).